The primary structure comprises 253 residues: Triosephosphate isomerase, cytosolic (253 aa).

The substrate site is built by Asn-10 and Lys-12. Catalysis depends on His-96, which acts as the Electrophile. The Proton acceptor role is filled by Glu-166.

The protein belongs to the triosephosphate isomerase family. As to quaternary structure, homodimer.

Its subcellular location is the cytoplasm. It carries out the reaction D-glyceraldehyde 3-phosphate = dihydroxyacetone phosphate. Its pathway is carbohydrate biosynthesis; gluconeogenesis. It functions in the pathway carbohydrate degradation; glycolysis; D-glyceraldehyde 3-phosphate from glycerone phosphate: step 1/1. This is Triosephosphate isomerase, cytosolic from Secale cereale (Rye).